We begin with the raw amino-acid sequence, 202 residues long: MYLGRILAVGRNSNGSFVAYRVSSRSFPNRTTSIQEERVAVVPVEGHERDVFRNPYIAYNCIRIVGDTAVVSNGSHTDTIADKVALGMNLRDAIGLSLLAMDYEKDELNTPRIAAAINGSEAFIGIVTADGLMVSRVPEETPVYISTYEQTEPAATEFKAGSPEEAAEFILKGGEFAAFTHPVTAAAAFNDGEGWNLATREM.

The protein belongs to the archaeal IMP cyclohydrolase family.

The enzyme catalyses IMP + H2O = 5-formamido-1-(5-phospho-D-ribosyl)imidazole-4-carboxamide. Its pathway is purine metabolism; IMP biosynthesis via de novo pathway; IMP from 5-formamido-1-(5-phospho-D-ribosyl)imidazole-4-carboxamide: step 1/1. Functionally, catalyzes the cyclization of 5-formylamidoimidazole-4-carboxamide ribonucleotide to IMP. The protein is IMP cyclohydrolase of Methanothermobacter thermautotrophicus (strain ATCC 29096 / DSM 1053 / JCM 10044 / NBRC 100330 / Delta H) (Methanobacterium thermoautotrophicum).